A 559-amino-acid chain; its full sequence is Sesquiterpene synthase (559 aa).

The Mg(2+) site is built by Asp-312, Asp-316, and Glu-464. The DDXXD motif signature appears at Asp-312 to Asp-316.

It belongs to the terpene synthase family. Tpsa subfamily. Requires Mg(2+) as cofactor. Mn(2+) is required as a cofactor.

Functionally, catalyzes alpha-humulene and delta-cadinene, as well as beta-elemene, the thermal rearrangement product of germacrene A and several other bicyclic sesquiterpenes when incubated with (2E,6E)-farnesyl diphosphate. This is Sesquiterpene synthase from Santalum austrocaledonicum (Sandalwood).